A 246-amino-acid chain; its full sequence is Eukaryotic translation initiation factor 6 (246 aa).

Residues serine 174 and serine 175 each carry the phosphoserine; by CK1 modification.

Belongs to the eIF-6 family. In terms of assembly, monomer. Associates with the 60S ribosomal subunit. Post-translationally, phosphorylation at Ser-174 and Ser-175 promotes nuclear export.

Its subcellular location is the cytoplasm. The protein localises to the nucleus. The protein resides in the nucleolus. Binds to the 60S ribosomal subunit and prevents its association with the 40S ribosomal subunit to form the 80S initiation complex in the cytoplasm. Is also involved in ribosome biogenesis. Associates with pre-60S subunits in the nucleus and is involved in its nuclear export. The polypeptide is Eukaryotic translation initiation factor 6 (tif-6) (Neurospora crassa (strain ATCC 24698 / 74-OR23-1A / CBS 708.71 / DSM 1257 / FGSC 987)).